Consider the following 110-residue polypeptide: Phosphoribosyl-ATP pyrophosphatase (110 aa).

The protein belongs to the PRA-PH family.

It localises to the cytoplasm. It carries out the reaction 1-(5-phospho-beta-D-ribosyl)-ATP + H2O = 1-(5-phospho-beta-D-ribosyl)-5'-AMP + diphosphate + H(+). The protein operates within amino-acid biosynthesis; L-histidine biosynthesis; L-histidine from 5-phospho-alpha-D-ribose 1-diphosphate: step 2/9. In Hahella chejuensis (strain KCTC 2396), this protein is Phosphoribosyl-ATP pyrophosphatase.